Here is a 388-residue protein sequence, read N- to C-terminus: Probable peptidoglycan glycosyltransferase FtsW (388 aa).

The next 11 membrane-spanning stretches (helical) occupy residues 16-36, 54-74, 82-102, 109-129, 144-164, 167-187, 189-209, 233-253, 277-297, 310-330, and 342-362; these read LVLIVLALITIGLVMVLSSSV, VFALGVGGLFAALVLMVPSQS, WFLLGLVLLALVLIFGREIGG, LVVMNFQPAEWMKIATILFLA, TAVIRLFLPFGIMAGLLLLQP, GTTVLIAGVLVGMLFIAGAPF, YFVITVLPIGAILAVLLINSP, SQALMAIGSGGITGSGLGASV, WLGVVILLSLYGLLLWRMFAV, ALVVYGVAIMFAGQLLINVGV, and LPFVSYGGSSLMMALLAIGLV.

Belongs to the SEDS family. FtsW subfamily.

The protein resides in the cell inner membrane. It carries out the reaction [GlcNAc-(1-&gt;4)-Mur2Ac(oyl-L-Ala-gamma-D-Glu-L-Lys-D-Ala-D-Ala)](n)-di-trans,octa-cis-undecaprenyl diphosphate + beta-D-GlcNAc-(1-&gt;4)-Mur2Ac(oyl-L-Ala-gamma-D-Glu-L-Lys-D-Ala-D-Ala)-di-trans,octa-cis-undecaprenyl diphosphate = [GlcNAc-(1-&gt;4)-Mur2Ac(oyl-L-Ala-gamma-D-Glu-L-Lys-D-Ala-D-Ala)](n+1)-di-trans,octa-cis-undecaprenyl diphosphate + di-trans,octa-cis-undecaprenyl diphosphate + H(+). It participates in cell wall biogenesis; peptidoglycan biosynthesis. Functionally, peptidoglycan polymerase that is essential for cell division. This is Probable peptidoglycan glycosyltransferase FtsW from Thiomicrospira cyclica (strain DSM 14477 / JCM 11371 / ALM1) (Thioalkalimicrobium cyclicum).